Here is a 720-residue protein sequence, read N- to C-terminus: Heat shock protein homolog pss1 (720 aa).

Ser-38 is subject to Phosphoserine. Thr-39 carries the post-translational modification Phosphothreonine. A compositionally biased stretch (basic and acidic residues) spans 658 to 690; it reads KRQKVQAEREAAKAATKSEAEKQKPSGKFEEGT. A disordered region spans residues 658-720; the sequence is KRQKVQAERE…ETMEIDEQKE (63 aa). Over residues 703–720 the composition is skewed to acidic residues; that stretch reads VAPENEEVETMEIDEQKE.

This sequence belongs to the heat shock protein 70 family.

The protein localises to the cytoplasm. Required for normal growth at various temperatures. This chain is Heat shock protein homolog pss1 (pss1), found in Schizosaccharomyces pombe (strain 972 / ATCC 24843) (Fission yeast).